A 560-amino-acid chain; its full sequence is Probable sulfate transporter Rv1739c (560 aa).

The tract at residues 1–436 (MIPTMTSAGW…VLGFVPGIAG (436 aa)) is required for sulfate transport in E.coli. A run of 11 helical transmembrane segments spans residues 29–49 (VLAG…YATV), 51–71 (GLPP…YALL), 79–99 (IGPE…MAAG), 105–125 (AVLA…AGTA), 138–158 (VLVG…LGTI), 184–204 (WPTF…TRWA), 207–227 (APGP…MSLD), 256–276 (ALII…VLTA), 333–353 (LIAL…LAMF), 355–375 (IAAL…LSEF), and 394–414 (AAVL…LSIL). In terms of domain architecture, STAS spans 442–557 (DYPQAKRVPG…MTLPTAVQAF (116 aa)).

It belongs to the SLC26A/SulP transporter (TC 2.A.53) family.

The protein resides in the cell membrane. Its function is as follows. Expression in E.coli induces sulfate uptake during early- to mid-log phase growth. Uptake is maximal at pH 6.0, is sulfate-specific, requires E.coli CysA and the transmembrane segment but not the STAS domain of the protein. The chain is Probable sulfate transporter Rv1739c from Mycobacterium tuberculosis (strain ATCC 25618 / H37Rv).